Consider the following 550-residue polypeptide: Integral membrane protein DGCR2/IDD (550 aa).

The first 20 residues, 1-20 (MVPKADSGAFLLLFLLVLTV), serve as a signal peptide directing secretion. At 21-349 (TEPLRPELRC…LFDSMASGMR (329 aa)) the chain is on the extracellular side. Positions 28 to 68 (LRCNPGQFACRSGTIQCIPLPWQCDGWATCEDESDEANCPE) constitute an LDL-receptor class A domain. Intrachain disulfides connect Cys30–Cys44, Cys37–Cys57, and Cys51–Cys66. The interval 69–92 (VTGEVRPHHGKEAVDPRQGRARGG) is disordered. Residues 71–92 (GEVRPHHGKEAVDPRQGRARGG) show a composition bias toward basic and acidic residues. Positions 115–241 (CPTGWHHYEG…FCAQLQCFHF (127 aa)) constitute a C-type lectin domain. Cystine bridges form between Cys145/Cys265 and Cys233/Cys257. Asn149 and Asn196 each carry an N-linked (GlcNAc...) asparagine glycan. Residues 270–333 (TCVDIKDNVV…PKECCKFMCL (64 aa)) enclose the VWFC domain. A helical transmembrane segment spans residues 350–368 (LVVSCISSFLILSLLLFMV). Topologically, residues 369–550 (HRLRQRRRER…HSRSSLNTVV (182 aa)) are cytoplasmic. Ser381 bears the Phosphoserine mark. A disordered region spans residues 500-550 (AGASLADLEDSADSSSALLVPPDPAQSGSTPAAEALPGGGRHSRSSLNTVV).

Predominantly expressed in brain, heart, lung and fetal kidney. Low levels in liver and adult kidney.

It is found in the membrane. Putative adhesion receptor, that could be involved in cell-cell or cell-matrix interactions required for normal cell differentiation and migration. The polypeptide is Integral membrane protein DGCR2/IDD (DGCR2) (Homo sapiens (Human)).